Reading from the N-terminus, the 137-residue chain is MLVIILGVIGLLASSNLVSSSTSTRVGGHLPLTFDPPENELGYWCTYVESCRFCWDCEDGICTSRVWGNNSTSIIENDYVKYCEVSRWGDLCRYDVEEHIYHSMNCSDPKPWNPYKIARKEWKKDKHFRKELKKDEF.

The signal sequence occupies residues 1-20 (MLVIILGVIGLLASSNLVSS). Residues Asn-69, Asn-70, and Asn-105 are each glycosylated (N-linked (GlcNAc...) asparagine; by host).

The protein belongs to the asfaviruses V110 family.

The chain is Protein MGF 110-7L from Ornithodoros (relapsing fever ticks).